The sequence spans 726 residues: Long-chain-alcohol oxidase FAO4A (726 aa).

Residues 103 to 119 (ILLNWSSSYFSLLRMLF) form a helical membrane-spanning segment. 224-239 (CDAVVVGSGSGGGVAA) serves as a coordination point for FAD. His659 acts as the Proton acceptor in catalysis.

This sequence belongs to the GMC oxidoreductase family.

Its subcellular location is the membrane. It carries out the reaction a long-chain primary fatty alcohol + O2 = a long-chain fatty aldehyde + H2O2. In terms of biological role, long-chain fatty alcohol oxidase involved in the omega-oxidation pathway of lipid degradation. The sequence is that of Long-chain-alcohol oxidase FAO4A (FAO4A) from Arabidopsis thaliana (Mouse-ear cress).